The chain runs to 246 residues: MVVDFWTWEQTFQELIQEAKPRATWTLKLDGNLQLDCLAQGWKQYQQRAFGWFRCSSCQRSWASAQVQILCHTYWEHWTSQGQVRMRLFGQRCQKCSWSQYEMPEFSSDSTMRILSNLVQHILKKYYGNGTRKSPEMPVILEVSLEGSHDTANCEACTLGICGQGLKSCMTKPSKSLLPHLKTGNSSPGIGAVYLANQAKNQSAEAKEAKGSGYEKLGPSRDPDPLNICVFILLLVFIVVKCFTSE.

Over 1 to 224 (MVVDFWTWEQ…EKLGPSRDPD (224 aa)) the chain is Cytoplasmic. A 3CxxC-type zinc finger spans residues 48-159 (RAFGWFRCSS…DTANCEACTL (112 aa)). A helical transmembrane segment spans residues 225 to 245 (PLNICVFILLLVFIVVKCFTS).

It belongs to the TMEM7 family. As to quaternary structure, interacts with TASR16. Interacts with OPRD1 and OPRM1; the interaction promotes cell surface localization of the OPDR1-OPRM1 heterodimer. In terms of assembly, (Microbial infection) Interacts with influenza A virus protein NS1; this interaction sequesters NS1 from interacting with RIG-I/DDX58 to restore antiviral signaling. In terms of tissue distribution, expressed in circumvallate papillae and testis.

It is found in the membrane. Its subcellular location is the cytoplasm. Its function is as follows. Chaperone protein that facilitates the trafficking and functional cell surface expression of some G-protein coupled receptors (GPCRs). Promotes functional expression of the bitter taste receptor TAS2R16. Also promotes functional expression of the opioid receptor heterodimer OPRD1-OPRM1. In addition, acts as a potent IFN-inducible suppressor of pathogens including lyssavirus rabies, influenza A or yellow fever virus. Mechanistically, associates with the viral replicase, binds viral RNA, and thereby suppresses viral genome amplification that replicates at the endoplasmic reticulum. In addition, restores antiviral signaling by interacting with and sequestering influenza A virus protein NS1. The polypeptide is Receptor-transporting protein 4 (RTP4) (Homo sapiens (Human)).